Consider the following 412-residue polypeptide: MSESDETKSISSLISSSSSSRPKKYICTYEGCDKAYNRPSLLEQHLRTHSNDRPYKCTVEDCDKAFFRKSHLETHIVSHSEKKPFHCSVCGKGVNSRQHLKRHEITHTKSFKCTFENCQEAFYKHQSLRHHILSVHEKTLTCKQCNKVFTRPSKLAQHKLKHHGGSPAYQCDHPGCFKNFQTWSVLQFHIKQSHPKLKCPKCGKGCVGKKGLSSHMLSHDDSTMIKIWTCDYCDVGKFAKKNELVEHYNIFHDGNIPDDLLKETEVKKLENLLDQGSKLNNLHELETEKLKVEEDEEDEEDSLDEKRSDVRSDSMSAQRSIKSFTASLEGSKSVSKLISNSGKKINCPKNNCDRMFSREYDLRRHLKWHDDNLQRIESFLNSIEKEETPEGEPLVKKARMDLLPNETSVISR.

Positions 1–20 (MSESDETKSISSLISSSSSS) are disordered. Residues 9-20 (SISSLISSSSSS) show a composition bias toward low complexity. 7 C2H2-type zinc fingers span residues 25 to 49 (YICTYEGCDKAYNRPSLLEQHLRTH), 55 to 79 (YKCTVEDCDKAFFRKSHLETHIVSH), 85 to 107 (FHCSVCGKGVNSRQHLKRHEITH), 111 to 136 (FKCTFENCQEAFYKHQSLRHHILSVH), 140 to 162 (LTCKQCNKVFTRPSKLAQHKLKH), 169 to 194 (YQCDHPGCFKNFQTWSVLQFHIKQSH), and 197 to 219 (LKCPKCGKGCVGKKGLSSHMLSH). A C2H2-type 8; degenerate zinc finger spans residues 228 to 252 (WTCDYCDVGKFAKKNELVEHYNIFH). The segment at 285–316 (LETEKLKVEEDEEDEEDSLDEKRSDVRSDSMS) is disordered. Residues 293–303 (EEDEEDEEDSL) show a composition bias toward acidic residues. The segment at 345-369 (INCPKNNCDRMFSREYDLRRHLKWH) adopts a C2H2-type 9 zinc-finger fold.

It is found in the nucleus. In terms of biological role, transcription factor required for transcription of 5S rRNA by RNA polymerase III. This Candida albicans (strain SC5314 / ATCC MYA-2876) (Yeast) protein is Transcription factor IIIA (PZF1).